The primary structure comprises 447 residues: Zinc finger protein ZIC 1 (447 aa).

The C2H2-type 1; atypical zinc finger occupies 225 to 260; that stretch reads LICKWIEPEQLANPKKSCNKTFSTMHELVTHVTVEH. The C2H2-type 2; atypical zinc finger occupies 269 to 296; the sequence is HICFWEECPREGKPFKAKYKLVNHIRVH. C2H2-type zinc fingers lie at residues 302–326, 332–356, and 362–384; these read FPCPFPGCGKVFARSENLKIHKRTH, FKCEFEGCDRRFANSSDRKKHMHVH, and YLCKMCDKSYTHPSSLRKHMKVH. The segment at 375-434 is disordered; the sequence is SSLRKHMKVHESSSQGSQPSPAASSGYESSTPPTIVSPTTDNPTTSSMSPSSSAVHHTAG. Residues 386-427 show a composition bias toward low complexity; sequence SSSQGSQPSPAASSGYESSTPPTIVSPTTDNPTTSSMSPSSS.

The protein belongs to the GLI C2H2-type zinc-finger protein family. Interacts (via the C2H2-type domains 3, 4 and 5) with MDFIC (via the C2H2-type domains 3, 4 and 5). Interacts with GLI1; the interaction enhances transcription activation. Interacts with GLI2. Interacts with GLI3; the interaction enhances transcription activation. Expressed in osteoblasts (at protein level). Expressed in the CNS. A high level expression is seen in the cerebellum, while a low level expression is seen in the olfactory bulb, diencephalon, and brainstem. Expressed in lumbar spine and iliac crest.

It is found in the nucleus. The protein localises to the cytoplasm. Its function is as follows. Acts as a transcriptional activator. Involved in neurogenesis. Plays important roles in the early stage of organogenesis of the CNS, as well as during dorsal spinal cord development and maturation of the cerebellum. Involved in the spatial distribution of mossy fiber (MF) neurons within the pontine gray nucleus (PGN). Plays a role in the regulation of MF axon pathway choice. Promotes MF migration towards ipsilaterally-located cerebellar territories. May have a role in shear flow mechanotransduction in osteocytes. Retains nuclear GLI1 and GLI3 in the cytoplasm. Binds to the minimal GLI-consensus sequence 5'-TGGGTGGTC-3'. This chain is Zinc finger protein ZIC 1 (Zic1), found in Mus musculus (Mouse).